The following is a 498-amino-acid chain: NADP-dependent glyceraldehyde-3-phosphate dehydrogenase (498 aa).

Substrate is bound by residues Arg118 and 171-172 (NY). NADP(+)-binding residues include Lys194, Thr197, and Asp232. An NAD(+)-binding site is contributed by 247 to 251 (GGDTG). Residue Glu266 is the Proton acceptor of the active site. A substrate-binding site is contributed by 299-301 (RCT). Catalysis depends on Cys300, which acts as the Nucleophile. Glu393 is an NADP(+) binding site. Residue Arg453 coordinates substrate.

This sequence belongs to the aldehyde dehydrogenase family.

It is found in the cytoplasm. The enzyme catalyses D-glyceraldehyde 3-phosphate + NADP(+) + H2O = (2R)-3-phosphoglycerate + NADPH + 2 H(+). Important as a means of generating NADPH for biosynthetic reactions. The sequence is that of NADP-dependent glyceraldehyde-3-phosphate dehydrogenase (GPN1) from Zea mays (Maize).